Consider the following 229-residue polypeptide: Cytochrome c oxidase subunit 2 (229 aa).

The Mitochondrial intermembrane segment spans residues 1-14; the sequence is MANPTHLGFQDAMS. The helical transmembrane segment at 15-45 threads the bilayer; the sequence is PLMEELLYFHDHTLMILFLISSLVFYMIFAL. Residues 46–59 are Mitochondrial matrix-facing; the sequence is LFPKLYYPNTSDVQ. A helical transmembrane segment spans residues 60–87; that stretch reads EVEVIWTVLPAIVLISIALPSLRTLYLM. Topologically, residues 88–229 are mitochondrial intermembrane; sequence DETNNPCLTI…QLWLEDSILS (142 aa). Cu cation-binding residues include His161, Cys196, Glu198, Cys200, His204, and Met207. Glu198 serves as a coordination point for Mg(2+).

Belongs to the cytochrome c oxidase subunit 2 family. As to quaternary structure, component of the cytochrome c oxidase (complex IV, CIV), a multisubunit enzyme composed of 14 subunits. The complex is composed of a catalytic core of 3 subunits MT-CO1, MT-CO2 and MT-CO3, encoded in the mitochondrial DNA, and 11 supernumerary subunits COX4I, COX5A, COX5B, COX6A, COX6B, COX6C, COX7A, COX7B, COX7C, COX8 and NDUFA4, which are encoded in the nuclear genome. The complex exists as a monomer or a dimer and forms supercomplexes (SCs) in the inner mitochondrial membrane with NADH-ubiquinone oxidoreductase (complex I, CI) and ubiquinol-cytochrome c oxidoreductase (cytochrome b-c1 complex, complex III, CIII), resulting in different assemblies (supercomplex SCI(1)III(2)IV(1) and megacomplex MCI(2)III(2)IV(2)). Found in a complex with TMEM177, COA6, COX18, COX20, SCO1 and SCO2. Interacts with TMEM177 in a COX20-dependent manner. Interacts with COX20. Interacts with COX16. Requires Cu cation as cofactor.

It is found in the mitochondrion inner membrane. It catalyses the reaction 4 Fe(II)-[cytochrome c] + O2 + 8 H(+)(in) = 4 Fe(III)-[cytochrome c] + 2 H2O + 4 H(+)(out). Functionally, component of the cytochrome c oxidase, the last enzyme in the mitochondrial electron transport chain which drives oxidative phosphorylation. The respiratory chain contains 3 multisubunit complexes succinate dehydrogenase (complex II, CII), ubiquinol-cytochrome c oxidoreductase (cytochrome b-c1 complex, complex III, CIII) and cytochrome c oxidase (complex IV, CIV), that cooperate to transfer electrons derived from NADH and succinate to molecular oxygen, creating an electrochemical gradient over the inner membrane that drives transmembrane transport and the ATP synthase. Cytochrome c oxidase is the component of the respiratory chain that catalyzes the reduction of oxygen to water. Electrons originating from reduced cytochrome c in the intermembrane space (IMS) are transferred via the dinuclear copper A center (CU(A)) of subunit 2 and heme A of subunit 1 to the active site in subunit 1, a binuclear center (BNC) formed by heme A3 and copper B (CU(B)). The BNC reduces molecular oxygen to 2 water molecules using 4 electrons from cytochrome c in the IMS and 4 protons from the mitochondrial matrix. The sequence is that of Cytochrome c oxidase subunit 2 (MT-CO2) from Alligator mississippiensis (American alligator).